The primary structure comprises 176 residues: Large ribosomal subunit protein uL10 (176 aa).

The protein belongs to the universal ribosomal protein uL10 family. As to quaternary structure, part of the ribosomal stalk of the 50S ribosomal subunit. The N-terminus interacts with L11 and the large rRNA to form the base of the stalk. The C-terminus forms an elongated spine to which L12 dimers bind in a sequential fashion forming a multimeric L10(L12)X complex.

Functionally, forms part of the ribosomal stalk, playing a central role in the interaction of the ribosome with GTP-bound translation factors. The protein is Large ribosomal subunit protein uL10 (rplJ) of Streptomyces antibioticus.